Here is a 349-residue protein sequence, read N- to C-terminus: Guanine nucleotide-binding protein alpha-13 subunit (349 aa).

The N-myristoyl glycine moiety is linked to residue glycine 2. A lipid anchor (S-palmitoyl cysteine) is attached at cysteine 3. The G-alpha domain maps to 35 to 349; sequence SHIRLLLLGS…VFKDIMKRKR (315 aa). Residues 38–51 are G1 motif; sequence RLLLLGSAESGKTT. GTP is bound by residues 43–50, 177–183, 202–206, 271–274, and alanine 327; these read GSAESGKT, IMAYVPT, DIGGQ, and NEID. The tract at residues 175–183 is G2 motif; it reads DLIMAYVPT. Threonine 183 contributes to the Mg(2+) binding site. The interval 198–207 is G3 motif; the sequence is FQLFDIGGQK. The G4 motif stretch occupies residues 267-274; sequence YLFLNEID. The G5 motif stretch occupies residues 325 to 330; that stretch reads CIAIDT.

Belongs to the G-alpha family. In terms of assembly, g proteins are composed of 3 units; alpha, beta and gamma. The alpha chain contains the guanine nucleotide binding site.

Functionally, guanine nucleotide-binding proteins (G proteins) are involved as modulators or transducers in various transmembrane signaling systems. In Caenorhabditis briggsae, this protein is Guanine nucleotide-binding protein alpha-13 subunit.